The sequence spans 319 residues: tRNA N6-adenosine threonylcarbamoyltransferase (319 aa).

Residues His110 and His114 each coordinate Fe cation. Substrate contacts are provided by residues 132 to 136 (VVSGG), Asp165, Gly178, Asp182, and Asn271. Position 300 (Asp300) interacts with Fe cation.

Belongs to the KAE1 / TsaD family. Fe(2+) is required as a cofactor.

It localises to the cytoplasm. It carries out the reaction L-threonylcarbamoyladenylate + adenosine(37) in tRNA = N(6)-L-threonylcarbamoyladenosine(37) in tRNA + AMP + H(+). Required for the formation of a threonylcarbamoyl group on adenosine at position 37 (t(6)A37) in tRNAs that read codons beginning with adenine. Is involved in the transfer of the threonylcarbamoyl moiety of threonylcarbamoyl-AMP (TC-AMP) to the N6 group of A37, together with TsaE and TsaB. TsaD likely plays a direct catalytic role in this reaction. The polypeptide is tRNA N6-adenosine threonylcarbamoyltransferase (Mycoplasma capricolum subsp. capricolum (strain California kid / ATCC 27343 / NCTC 10154)).